Reading from the N-terminus, the 175-residue chain is Large ribosomal subunit protein uL10 (175 aa).

It belongs to the universal ribosomal protein uL10 family. In terms of assembly, part of the ribosomal stalk of the 50S ribosomal subunit. The N-terminus interacts with L11 and the large rRNA to form the base of the stalk. The C-terminus forms an elongated spine to which L12 dimers bind in a sequential fashion forming a multimeric L10(L12)X complex.

Forms part of the ribosomal stalk, playing a central role in the interaction of the ribosome with GTP-bound translation factors. In Prochlorococcus marinus (strain MIT 9313), this protein is Large ribosomal subunit protein uL10.